Consider the following 622-residue polypeptide: Coiled-coil domain-containing protein 17 (622 aa).

Coiled coils occupy residues 81-102 (RSAL…QEMR), 146-207 (ARRV…LEVL), and 294-320 (GELP…RGRA). 2 disordered regions span residues 334–356 (SLQP…PLPP) and 584–622 (PAVG…PVSF). Pro residues predominate over residues 344-356 (PLLPPPVAPPLPP). Residues 593-615 (PRTEEPLSGVKDRDEGLGPHHSS) are compositionally biased toward basic and acidic residues.

The protein is Coiled-coil domain-containing protein 17 (CCDC17) of Homo sapiens (Human).